The primary structure comprises 636 residues: Signal recognition particle receptor subunit alpha (636 aa).

Disordered stretches follow at residues 132 to 205 (APTT…ELSK), 217 to 246 (IQKH…APRV), and 280 to 314 (IRGT…TKGT). Basic and acidic residues-rich tracts occupy residues 137–146 (KKFEDSEKAK) and 153–165 (IETR…EKAK). Ser-177 is subject to Phosphoserine. Basic and acidic residues predominate over residues 217–238 (IQKHGKGLDKSSKSTKSDTPKE). Thr-283 is modified (phosphothreonine). A phosphoserine mark is found at Ser-295, Ser-296, and Ser-297. Residues 302-312 (ATQNTKPSATK) show a composition bias toward polar residues. At Thr-303 the chain carries Phosphothreonine. Residues 417-634 (YVVTFCGVNG…NAKAVVAALM (218 aa)) are NG domain. Residues 423–430 (GVNGVGKS) and 518–522 (DTAGR) contribute to the GTP site. At Thr-576 the chain carries Phosphothreonine. A GTP-binding site is contributed by 586–589 (TKFD).

The protein belongs to the GTP-binding SRP family. As to quaternary structure, heterodimer with SRPRB. Interacts with the signal recognition particle (SRP) complex subunit SRP54.

It localises to the endoplasmic reticulum membrane. Functionally, component of the SRP (signal recognition particle) receptor. Ensures, in conjunction with the signal recognition particle, the correct targeting of the nascent secretory proteins to the endoplasmic reticulum membrane system. Forms a guanosine 5'-triphosphate (GTP)-dependent complex with the SRP subunit SRP54. SRP receptor compaction and GTPase rearrangement drive SRP-mediated cotranslational protein translocation into the ER. The protein is Signal recognition particle receptor subunit alpha of Mus musculus (Mouse).